A 119-amino-acid polypeptide reads, in one-letter code: Large ribosomal subunit protein uL22 (119 aa).

It belongs to the universal ribosomal protein uL22 family. As to quaternary structure, part of the 50S ribosomal subunit.

Its function is as follows. This protein binds specifically to 23S rRNA; its binding is stimulated by other ribosomal proteins, e.g. L4, L17, and L20. It is important during the early stages of 50S assembly. It makes multiple contacts with different domains of the 23S rRNA in the assembled 50S subunit and ribosome. In terms of biological role, the globular domain of the protein is located near the polypeptide exit tunnel on the outside of the subunit, while an extended beta-hairpin is found that lines the wall of the exit tunnel in the center of the 70S ribosome. The polypeptide is Large ribosomal subunit protein uL22 (Rickettsia canadensis (strain McKiel)).